A 684-amino-acid chain; its full sequence is Glycine--tRNA ligase beta subunit (684 aa).

This sequence belongs to the class-II aminoacyl-tRNA synthetase family. Tetramer of two alpha and two beta subunits.

The protein resides in the cytoplasm. It catalyses the reaction tRNA(Gly) + glycine + ATP = glycyl-tRNA(Gly) + AMP + diphosphate. This chain is Glycine--tRNA ligase beta subunit, found in Pseudomonas aeruginosa (strain UCBPP-PA14).